The following is a 187-amino-acid chain: ATP synthase subunit b 2 (187 aa).

Residues 32–52 (TTFAAQILWLAIAFGLLYYLM) traverse the membrane as a helical segment.

The protein belongs to the ATPase B chain family. In terms of assembly, F-type ATPases have 2 components, F(1) - the catalytic core - and F(0) - the membrane proton channel. F(1) has five subunits: alpha(3), beta(3), gamma(1), delta(1), epsilon(1). F(0) has three main subunits: a(1), b(2) and c(10-14). The alpha and beta chains form an alternating ring which encloses part of the gamma chain. F(1) is attached to F(0) by a central stalk formed by the gamma and epsilon chains, while a peripheral stalk is formed by the delta and b chains.

The protein resides in the cell inner membrane. F(1)F(0) ATP synthase produces ATP from ADP in the presence of a proton or sodium gradient. F-type ATPases consist of two structural domains, F(1) containing the extramembraneous catalytic core and F(0) containing the membrane proton channel, linked together by a central stalk and a peripheral stalk. During catalysis, ATP synthesis in the catalytic domain of F(1) is coupled via a rotary mechanism of the central stalk subunits to proton translocation. Functionally, component of the F(0) channel, it forms part of the peripheral stalk, linking F(1) to F(0). The b'-subunit is a diverged and duplicated form of b found in plants and photosynthetic bacteria. The sequence is that of ATP synthase subunit b 2 (atpF2) from Methylobacterium sp. (strain 4-46).